The following is a 346-amino-acid chain: Elongation factor Ts (346 aa).

Residues 80 to 83 (TDFV) are involved in Mg(2+) ion dislocation from EF-Tu.

Belongs to the EF-Ts family.

The protein resides in the cytoplasm. In terms of biological role, associates with the EF-Tu.GDP complex and induces the exchange of GDP to GTP. It remains bound to the aminoacyl-tRNA.EF-Tu.GTP complex up to the GTP hydrolysis stage on the ribosome. In Streptococcus pneumoniae (strain ATCC BAA-255 / R6), this protein is Elongation factor Ts (tsf).